Here is a 500-residue protein sequence, read N- to C-terminus: Probable malate:quinone oxidoreductase (500 aa).

This sequence belongs to the MQO family. The cofactor is FAD.

It catalyses the reaction (S)-malate + a quinone = a quinol + oxaloacetate. It participates in carbohydrate metabolism; tricarboxylic acid cycle; oxaloacetate from (S)-malate (quinone route): step 1/1. This Bacillus cytotoxicus (strain DSM 22905 / CIP 110041 / 391-98 / NVH 391-98) protein is Probable malate:quinone oxidoreductase.